The sequence spans 228 residues: Large ribosomal subunit protein uL3 (228 aa).

It belongs to the universal ribosomal protein uL3 family. As to quaternary structure, part of the 50S ribosomal subunit. Forms a cluster with proteins L14 and L19.

Functionally, one of the primary rRNA binding proteins, it binds directly near the 3'-end of the 23S rRNA, where it nucleates assembly of the 50S subunit. This is Large ribosomal subunit protein uL3 from Leuconostoc mesenteroides subsp. mesenteroides (strain ATCC 8293 / DSM 20343 / BCRC 11652 / CCM 1803 / JCM 6124 / NCDO 523 / NBRC 100496 / NCIMB 8023 / NCTC 12954 / NRRL B-1118 / 37Y).